Reading from the N-terminus, the 84-residue chain is U8-theraphotoxin-Hhn1g (84 aa).

The N-terminal stretch at 1 to 21 (MKVVLLVCLVWMMAMMELVSC) is a signal peptide. 5 disulfides stabilise this stretch: Cys23–Cys35, Cys29–Cys44, Cys34–Cys67, Cys54–Cys75, and Cys69–Cys81.

It belongs to the AVIT (prokineticin) family. As to expression, expressed by the venom gland.

The protein resides in the secreted. In Cyriopagopus hainanus (Chinese bird spider), this protein is U8-theraphotoxin-Hhn1g.